Here is a 421-residue protein sequence, read N- to C-terminus: Gamma-glutamyl phosphate reductase (421 aa).

It belongs to the gamma-glutamyl phosphate reductase family.

The protein localises to the cytoplasm. It catalyses the reaction L-glutamate 5-semialdehyde + phosphate + NADP(+) = L-glutamyl 5-phosphate + NADPH + H(+). It participates in amino-acid biosynthesis; L-proline biosynthesis; L-glutamate 5-semialdehyde from L-glutamate: step 2/2. Functionally, catalyzes the NADPH-dependent reduction of L-glutamate 5-phosphate into L-glutamate 5-semialdehyde and phosphate. The product spontaneously undergoes cyclization to form 1-pyrroline-5-carboxylate. This Leptospira biflexa serovar Patoc (strain Patoc 1 / ATCC 23582 / Paris) protein is Gamma-glutamyl phosphate reductase.